A 174-amino-acid chain; its full sequence is RNA pyrophosphohydrolase (174 aa).

The 144-residue stretch at 6 to 149 (GFRANVGIII…KRDVYRKVMK (144 aa)) folds into the Nudix hydrolase domain. Residues 38 to 59 (GGVDDGETAEEAMYRELYEEVG) carry the Nudix box motif.

It belongs to the Nudix hydrolase family. RppH subfamily. A divalent metal cation is required as a cofactor.

Accelerates the degradation of transcripts by removing pyrophosphate from the 5'-end of triphosphorylated RNA, leading to a more labile monophosphorylated state that can stimulate subsequent ribonuclease cleavage. The sequence is that of RNA pyrophosphohydrolase from Shewanella baltica (strain OS223).